Consider the following 102-residue polypeptide: ATP-dependent Clp protease adapter protein ClpS (102 aa).

This sequence belongs to the ClpS family. In terms of assembly, binds to the N-terminal domain of the chaperone ClpA.

Its function is as follows. Involved in the modulation of the specificity of the ClpAP-mediated ATP-dependent protein degradation. This Shewanella loihica (strain ATCC BAA-1088 / PV-4) protein is ATP-dependent Clp protease adapter protein ClpS.